The primary structure comprises 345 residues: Annexin A9 (345 aa).

Annexin repeat units lie at residues 41 to 112 (FSVD…ALLQ), 113 to 184 (PAAQ…ALSK), 197 to 266 (NLEE…SLAS), and 270 to 341 (NTAL…ALCR).

The protein belongs to the annexin family. As to quaternary structure, homodimer.

Functionally, may act as a low affinity receptor for acetylcholine. In Mus musculus (Mouse), this protein is Annexin A9 (Anxa9).